Reading from the N-terminus, the 621-residue chain is 1-deoxy-D-xylulose-5-phosphate synthase (621 aa).

Thiamine diphosphate is bound by residues H80 and 121-123 (GHS). D152 contributes to the Mg(2+) binding site. Thiamine diphosphate is bound by residues 153 to 154 (GA), N181, Y288, and E370. N181 is a binding site for Mg(2+).

The protein belongs to the transketolase family. DXPS subfamily. In terms of assembly, homodimer. Mg(2+) is required as a cofactor. Requires thiamine diphosphate as cofactor.

It catalyses the reaction D-glyceraldehyde 3-phosphate + pyruvate + H(+) = 1-deoxy-D-xylulose 5-phosphate + CO2. It functions in the pathway metabolic intermediate biosynthesis; 1-deoxy-D-xylulose 5-phosphate biosynthesis; 1-deoxy-D-xylulose 5-phosphate from D-glyceraldehyde 3-phosphate and pyruvate: step 1/1. Its function is as follows. Catalyzes the acyloin condensation reaction between C atoms 2 and 3 of pyruvate and glyceraldehyde 3-phosphate to yield 1-deoxy-D-xylulose-5-phosphate (DXP). This is 1-deoxy-D-xylulose-5-phosphate synthase from Vibrio vulnificus (strain CMCP6).